Consider the following 122-residue polypeptide: Large ribosomal subunit protein uL14 (122 aa).

This sequence belongs to the universal ribosomal protein uL14 family. As to quaternary structure, part of the 50S ribosomal subunit. Forms a cluster with proteins L3 and L19. In the 70S ribosome, L14 and L19 interact and together make contacts with the 16S rRNA in bridges B5 and B8.

Its function is as follows. Binds to 23S rRNA. Forms part of two intersubunit bridges in the 70S ribosome. The polypeptide is Large ribosomal subunit protein uL14 (Thermobifida fusca (strain YX)).